A 699-amino-acid polypeptide reads, in one-letter code: Glycine--tRNA ligase beta subunit (699 aa).

Belongs to the class-II aminoacyl-tRNA synthetase family. Tetramer of two alpha and two beta subunits.

It is found in the cytoplasm. The enzyme catalyses tRNA(Gly) + glycine + ATP = glycyl-tRNA(Gly) + AMP + diphosphate. This Baumannia cicadellinicola subsp. Homalodisca coagulata protein is Glycine--tRNA ligase beta subunit.